A 573-amino-acid chain; its full sequence is DNA ligase (573 aa).

Position 250 (glutamate 250) interacts with ATP. Lysine 252 functions as the N6-AMP-lysine intermediate in the catalytic mechanism. 6 residues coordinate ATP: arginine 257, arginine 272, glutamate 301, phenylalanine 342, arginine 432, and lysine 438.

The protein belongs to the ATP-dependent DNA ligase family. Mg(2+) serves as cofactor.

It carries out the reaction ATP + (deoxyribonucleotide)n-3'-hydroxyl + 5'-phospho-(deoxyribonucleotide)m = (deoxyribonucleotide)n+m + AMP + diphosphate.. DNA ligase that seals nicks in double-stranded DNA during DNA replication, DNA recombination and DNA repair. The chain is DNA ligase from Methanococcus vannielii (strain ATCC 35089 / DSM 1224 / JCM 13029 / OCM 148 / SB).